The primary structure comprises 260 residues: ATP-dependent zinc metalloprotease FTSH, chloroplastic (260 aa).

His219 provides a ligand contact to Zn(2+). The active site involves Glu220. Residue His223 participates in Zn(2+) binding.

The protein in the N-terminal section; belongs to the AAA ATPase family. It in the C-terminal section; belongs to the peptidase M41 family. Zn(2+) is required as a cofactor.

It is found in the plastid. It localises to the chloroplast thylakoid membrane. In terms of biological role, probable ATP-dependent zinc metallopeptidase. The polypeptide is ATP-dependent zinc metalloprotease FTSH, chloroplastic (Helianthus annuus (Common sunflower)).